The following is a 92-amino-acid chain: Protein canopy homolog 1 (92 aa).

Belongs to the canopy family.

The sequence is that of Protein canopy homolog 1 (CNPY1) from Homo sapiens (Human).